Reading from the N-terminus, the 571-residue chain is Proline--tRNA ligase (571 aa).

This sequence belongs to the class-II aminoacyl-tRNA synthetase family. ProS type 1 subfamily. Homodimer.

Its subcellular location is the cytoplasm. It catalyses the reaction tRNA(Pro) + L-proline + ATP = L-prolyl-tRNA(Pro) + AMP + diphosphate. Functionally, catalyzes the attachment of proline to tRNA(Pro) in a two-step reaction: proline is first activated by ATP to form Pro-AMP and then transferred to the acceptor end of tRNA(Pro). As ProRS can inadvertently accommodate and process non-cognate amino acids such as alanine and cysteine, to avoid such errors it has two additional distinct editing activities against alanine. One activity is designated as 'pretransfer' editing and involves the tRNA(Pro)-independent hydrolysis of activated Ala-AMP. The other activity is designated 'posttransfer' editing and involves deacylation of mischarged Ala-tRNA(Pro). The misacylated Cys-tRNA(Pro) is not edited by ProRS. This chain is Proline--tRNA ligase, found in Shewanella putrefaciens (strain CN-32 / ATCC BAA-453).